The primary structure comprises 91 residues: Probable Fe(2+)-trafficking protein (91 aa).

This sequence belongs to the Fe(2+)-trafficking protein family.

Functionally, could be a mediator in iron transactions between iron acquisition and iron-requiring processes, such as synthesis and/or repair of Fe-S clusters in biosynthetic enzymes. The chain is Probable Fe(2+)-trafficking protein from Xanthomonas axonopodis pv. citri (strain 306).